The following is an 883-amino-acid chain: Protein P (883 aa).

The tract at residues 1-183 (MHPFSRLFRN…GKPYSWEHRQ (183 aa)) is terminal protein domain (TP). The segment at 184–386 (LVQHNGQQHK…YCIHHIVSSL (203 aa)) is spacer. Residues 298–344 (RNSGHTTWFSSASNSNKSRSREKAYSSNSTSKRYSPPLNYEKSDFSS) form a disordered region. A polymerase/reverse transcriptase domain (RT) region spans residues 387 to 728 (DDWGPCTVTG…YEELWPVVRQ (342 aa)). One can recognise a Reverse transcriptase domain in the interval 397–638 (DVTIKSPRTP…NHLHFMGYVI (242 aa)). 3 residues coordinate Mg(2+): Asp469, Asp589, and Asp590.

Belongs to the hepadnaviridae P protein family.

The catalysed reaction is DNA(n) + a 2'-deoxyribonucleoside 5'-triphosphate = DNA(n+1) + diphosphate. It catalyses the reaction Endonucleolytic cleavage to 5'-phosphomonoester.. With respect to regulation, activated by host HSP70 and HSP40 in vitro to be able to bind the epsilon loop of the pgRNA. Because deletion of the RNase H region renders the protein partly chaperone-independent, the chaperones may be needed indirectly to relieve occlusion of the RNA-binding site by this domain. Inhibited by several reverse-transcriptase inhibitors: Lamivudine, Adefovir and Entecavir. Functionally, multifunctional enzyme that converts the viral RNA genome into dsDNA in viral cytoplasmic capsids. This enzyme displays a DNA polymerase activity that can copy either DNA or RNA templates, and a ribonuclease H (RNase H) activity that cleaves the RNA strand of RNA-DNA heteroduplexes in a partially processive 3'- to 5'-endonucleasic mode. Neo-synthesized pregenomic RNA (pgRNA) are encapsidated together with the P protein, and reverse-transcribed inside the nucleocapsid. Initiation of reverse-transcription occurs first by binding the epsilon loop on the pgRNA genome, and is initiated by protein priming, thereby the 5'-end of (-)DNA is covalently linked to P protein. Partial (+)DNA is synthesized from the (-)DNA template and generates the relaxed circular DNA (RC-DNA) genome. After budding and infection, the RC-DNA migrates in the nucleus, and is converted into a plasmid-like covalently closed circular DNA (cccDNA). The activity of P protein does not seem to be necessary for cccDNA generation, and is presumably released from (+)DNA by host nuclear DNA repair machinery. This chain is Protein P, found in Woodchuck hepatitis B virus (isolate 2) (WHV).